Here is a 132-residue protein sequence, read N- to C-terminus: Salivary protein 15 Iper-2 (132 aa).

The signal sequence occupies residues 1–18; sequence MKVVCIIVLFVIVAVNES. Asn-24, Asn-36, Asn-62, Asn-89, and Asn-101 each carry an N-linked (GlcNAc...) asparagine glycan. A CD4-binding region spans residues 113 to 132; it reads GPNGQTCADKSQCVGHIPGC.

The protein belongs to the salp15 family. Interacts with host CD4. Interacts with host DC-SIGN (CD209). As to quaternary structure, (Microbial infection) Interacts with Borrelia outer surface protein C (OspC). Expressed in salivary glands from feeding female ticks. Highly expressed 1 day after start of feeding, and weakly expressed at the initiation of feeding and 4 days after start of feeding.

It is found in the secreted. Salivary tick protein that downregulates host immune system by binding to both dendritic cells, and CD4(+) T cells. Specifically binds to the CD4 coreceptor on T cells. This interaction prevents the activation of the Src kinase, Lck, and its downstream substrate Zap-70, and results in deficient activation of PLCgamma1, the repression of calcium fluxes triggered by T-cell antigen receptor (TCR) ligation, and a subsequent reduction in interleukin-2 production. This salivary protein also binds to DC-SIGN (CD209) on dendritic cells (DC) and activates the Raf-1 kinase/MEK signaling pathway that results in down-regulating expression of pro-inflammatory cytokines. Furthermore, it inhibits T cell proliferation induced by DCs. It also inhibits in vitro keratinocyte inflammation induced by Borrelia burgdorferi or by the major outer surface protein (OspC) of Borrelia. In addition, it downregulates chemokines and monocyte chemoattractant protein 1, as well as several antimicrobial peptides such as defensins, cathelicidin, psoriasin, and RNase 7. Apart from its immunomodulatory activities, it is also associated with protection of Borrelia spirochetes from antibody-mediated killing through its binding to OspC. In vivo, tests on different immune disease animal models show promising therapeutic results, e.g., in inhibiting HIV infection, experimental autoimmune encephalomyelitis, transplantation rejection, and asthma. Its function is as follows. (Microbial infection) Protects Borrelia garinii from anti-Borrelia antibody-mediated cytotoxicity in vitro. May facilitate B.garinii transmission in mouse model. In terms of biological role, (Microbial infection) Protects Borrelia burgdorferi from anti-Borrelia antibody-mediated cytotoxicity in vitro. Functionally, (Microbial infection) Protects Borrelia afzelii from anti-Borrelia antibody-mediated cytotoxicity in vitro. The sequence is that of Salivary protein 15 Iper-2 from Ixodes persulcatus (Taiga tick).